A 278-amino-acid chain; its full sequence is NAD-capped RNA hydrolase NudC (278 aa).

Substrate is bound at residue arginine 84. Zn(2+) is bound by residues cysteine 114 and cysteine 117. A substrate-binding site is contributed by glutamate 127. Cysteine 132 and cysteine 135 together coordinate Zn(2+). Tyrosine 140 is a substrate binding site. One can recognise a Nudix hydrolase domain in the interval proline 141 to leucine 265. The a divalent metal cation site is built by alanine 174, glutamate 190, and glutamate 194. Positions glycine 175–glycine 196 match the Nudix box motif. Position 208–215 (glutamine 208–serine 215) interacts with substrate. Position 235 (glutamate 235) interacts with a divalent metal cation. Alanine 257 provides a ligand contact to substrate.

The protein belongs to the Nudix hydrolase family. NudC subfamily. As to quaternary structure, homodimer. Requires Mg(2+) as cofactor. It depends on Mn(2+) as a cofactor. Zn(2+) is required as a cofactor.

The enzyme catalyses a 5'-end NAD(+)-phospho-ribonucleoside in mRNA + H2O = a 5'-end phospho-adenosine-phospho-ribonucleoside in mRNA + beta-nicotinamide D-ribonucleotide + 2 H(+). The catalysed reaction is NAD(+) + H2O = beta-nicotinamide D-ribonucleotide + AMP + 2 H(+). It catalyses the reaction NADH + H2O = reduced beta-nicotinamide D-ribonucleotide + AMP + 2 H(+). Functionally, mRNA decapping enzyme that specifically removes the nicotinamide adenine dinucleotide (NAD) cap from a subset of mRNAs by hydrolyzing the diphosphate linkage to produce nicotinamide mononucleotide (NMN) and 5' monophosphate mRNA. The NAD-cap is present at the 5'-end of some mRNAs and stabilizes RNA against 5'-processing. Has preference for mRNAs with a 5'-end purine. Catalyzes the hydrolysis of a broad range of dinucleotide pyrophosphates. This is NAD-capped RNA hydrolase NudC from Pseudomonas aeruginosa (strain ATCC 15692 / DSM 22644 / CIP 104116 / JCM 14847 / LMG 12228 / 1C / PRS 101 / PAO1).